We begin with the raw amino-acid sequence, 385 residues long: Protein hunchback (385 aa).

Disordered regions lie at residues 1 to 94 (IGGI…YDAM) and 124 to 216 (ESRA…PGLR). Positions 63–77 (SASPSSSSKDSNGHS) are enriched in low complexity. Composition is skewed to basic and acidic residues over residues 126–135 (RASDARDHSP) and 173–203 (PERRSFDRFHDSGFDGVDHNKHDGDDGREGS). C2H2-type zinc fingers lie at residues 229-251 (FKCKQCEFVAVTKLSFWEHSKEH), 258-280 (LCCRKCPFVTEYKHHLEYHMRNH), 286-308 (FQCSQCSYSCVNKSMLNSHLKSH), and 314-338 (YRCADCNYATKYCDSLKLHLRKYQH). The interval 361–385 (TRRGPKQKPLSKIFEQQTGTNNHSP) is disordered. The segment covering 374 to 385 (FEQQTGTNNHSP) has biased composition (polar residues).

This sequence belongs to the hunchback C2H2-type zinc-finger protein family.

It is found in the nucleus. In terms of biological role, gap class segmentation protein that controls development of head structures. The sequence is that of Protein hunchback (hb) from Bombyx mori (Silk moth).